We begin with the raw amino-acid sequence, 267 residues long: uncharacterized protein (267 aa).

A disordered region spans residues 58-90; sequence RHTDDKQEKNQNEGEDNQKGENKTTDQQDGPKK. Helical transmembrane passes span 101-121 and 226-246; these read IYVLAVAGLSFVTSFIMLSQM and GMTTVKMIQLIIGVVILAWLG.

It is found in the membrane. This is an uncharacterized protein from Caenorhabditis elegans.